A 338-amino-acid chain; its full sequence is POU domain, class 4, transcription factor 3 (338 aa).

The POU-IV box signature appears at 56–65 (RAEALAAVDI). A disordered region spans residues 91-112 (TSPTVPISHPAALTSHPHHPVH). In terms of domain architecture, POU-specific spans 179-256 (DVESDPRELE…VLQAWLEEAE (78 aa)). A DNA-binding region (homeobox) is located at residues 274 to 333 (RKRKRTSIAAPEKRSLEAYFAIQPRPSSEKIAAIAEKLDLKKNVVRVWFCNQRQKQKRMK).

Belongs to the POU transcription factor family. Interacts with ISL1. As to expression, expressed in the chochlea of the inner ear.

The protein resides in the nucleus. The protein localises to the cytoplasm. In terms of biological role, acts as a transcriptional activator. Acts by binding to sequences related to the consensus octamer motif 5'-ATGCAAAT-3' in the regulatory regions of its target genes. Involved in the auditory system development, required for terminal differentiation of hair cells in the inner ear. This Rattus norvegicus (Rat) protein is POU domain, class 4, transcription factor 3.